A 208-amino-acid chain; its full sequence is Ribonuclease HII (208 aa).

The RNase H type-2 domain occupies 1–205 (MIVVGIDEAG…LQEIAPNYYI (205 aa)). A divalent metal cation contacts are provided by Asp-7, Glu-8, and Asp-104.

The protein belongs to the RNase HII family. The cofactor is Mn(2+). It depends on Mg(2+) as a cofactor.

The protein localises to the cytoplasm. It catalyses the reaction Endonucleolytic cleavage to 5'-phosphomonoester.. Its function is as follows. Endonuclease that specifically degrades the RNA of RNA-DNA hybrids. In Sulfurisphaera tokodaii (strain DSM 16993 / JCM 10545 / NBRC 100140 / 7) (Sulfolobus tokodaii), this protein is Ribonuclease HII.